Reading from the N-terminus, the 180-residue chain is Nucleoside-triphosphatase THEP1 (180 aa).

Residues 9-16 (GRPGIGKT) and 99-106 (VVIVDEVG) contribute to the ATP site.

Belongs to the THEP1 NTPase family.

The catalysed reaction is a ribonucleoside 5'-triphosphate + H2O = a ribonucleoside 5'-diphosphate + phosphate + H(+). In terms of biological role, has nucleotide phosphatase activity towards ATP, GTP, CTP, TTP and UTP. May hydrolyze nucleoside diphosphates with lower efficiency. The polypeptide is Nucleoside-triphosphatase THEP1 (Methanopyrus kandleri (strain AV19 / DSM 6324 / JCM 9639 / NBRC 100938)).